A 941-amino-acid chain; its full sequence is Isoleucine--tRNA ligase (941 aa).

The short motif at 58–68 (PYANGNIHLGH) is the 'HIGH' region element. An L-isoleucyl-5'-AMP-binding site is contributed by Glu564. Residues 605 to 609 (KMSKS) carry the 'KMSKS' region motif. ATP is bound at residue Lys608. Cys904, Cys907, Cys924, and Cys927 together coordinate Zn(2+).

This sequence belongs to the class-I aminoacyl-tRNA synthetase family. IleS type 1 subfamily. As to quaternary structure, monomer. Requires Zn(2+) as cofactor.

The protein resides in the cytoplasm. It catalyses the reaction tRNA(Ile) + L-isoleucine + ATP = L-isoleucyl-tRNA(Ile) + AMP + diphosphate. In terms of biological role, catalyzes the attachment of isoleucine to tRNA(Ile). As IleRS can inadvertently accommodate and process structurally similar amino acids such as valine, to avoid such errors it has two additional distinct tRNA(Ile)-dependent editing activities. One activity is designated as 'pretransfer' editing and involves the hydrolysis of activated Val-AMP. The other activity is designated 'posttransfer' editing and involves deacylation of mischarged Val-tRNA(Ile). This is Isoleucine--tRNA ligase from Hahella chejuensis (strain KCTC 2396).